The chain runs to 398 residues: Putative F-box protein At4g17780 (398 aa).

Residues 8-55 (PSSIYIVADLLEDIFLRLPLKSILISKSVSKRWRSILESKTFVERRMS) enclose the F-box domain.

This Arabidopsis thaliana (Mouse-ear cress) protein is Putative F-box protein At4g17780.